A 59-amino-acid polypeptide reads, in one-letter code: Chromatin protein Cren7 (59 aa).

Belongs to the Cren7 family. As to quaternary structure, monomer. Post-translationally, methylated at multiple sites, to varying extents.

It is found in the chromosome. Its subcellular location is the cytoplasm. Its function is as follows. A chromatin protein, binds double-stranded DNA without sequence specificity. Constrains negative DNA supercoils. The chain is Chromatin protein Cren7 from Pyrobaculum arsenaticum (strain DSM 13514 / JCM 11321 / PZ6).